The chain runs to 977 residues: Leucine--tRNA ligase (977 aa).

The 'HIGH' region signature appears at 11-21; it reads PYVNGYLHLGH. The insert stretch occupies residues 220–318; the sequence is VFYVYELYSL…EYYNTKVETQ (99 aa). A 'KMSKS' region motif is present at residues 699 to 703; that stretch reads KMSKS. Lys702 contributes to the ATP binding site.

Belongs to the class-I aminoacyl-tRNA synthetase family.

The protein resides in the cytoplasm. It catalyses the reaction tRNA(Leu) + L-leucine + ATP = L-leucyl-tRNA(Leu) + AMP + diphosphate. This chain is Leucine--tRNA ligase (leuS), found in Nanoarchaeum equitans (strain Kin4-M).